The following is a 44-amino-acid chain: Photosystem I reaction center subunit IX (44 aa).

Residues Phe9–Ile29 traverse the membrane as a helical segment.

This sequence belongs to the PsaJ family.

The protein resides in the cellular thylakoid membrane. In terms of biological role, may help in the organization of the PsaE and PsaF subunits. This is Photosystem I reaction center subunit IX from Prochlorococcus marinus (strain MIT 9515).